Here is a 330-residue protein sequence, read N- to C-terminus: Tryptophan--tRNA ligase (330 aa).

ATP contacts are provided by residues 10–12 (QPS) and 18–19 (GN). Positions 11–19 (PSGTLTLGN) match the 'HIGH' region motif. D133 contacts L-tryptophan. Residues 145–147 (GED), I184, and 193–197 (KMSKS) each bind ATP. Positions 193 to 197 (KMSKS) match the 'KMSKS' region motif.

The protein belongs to the class-I aminoacyl-tRNA synthetase family. As to quaternary structure, homodimer.

It is found in the cytoplasm. The enzyme catalyses tRNA(Trp) + L-tryptophan + ATP = L-tryptophyl-tRNA(Trp) + AMP + diphosphate + H(+). In terms of biological role, catalyzes the attachment of tryptophan to tRNA(Trp). The protein is Tryptophan--tRNA ligase of Halalkalibacterium halodurans (strain ATCC BAA-125 / DSM 18197 / FERM 7344 / JCM 9153 / C-125) (Bacillus halodurans).